A 140-amino-acid chain; its full sequence is Cell division protein SepF (140 aa).

A disordered region spans residues 15-47; it reads DSQYEEPTEASQAAAPTESATNTRSTPKVVPMQ.

It belongs to the SepF family. As to quaternary structure, homodimer. Interacts with FtsZ.

It is found in the cytoplasm. In terms of biological role, cell division protein that is part of the divisome complex and is recruited early to the Z-ring. Probably stimulates Z-ring formation, perhaps through the cross-linking of FtsZ protofilaments. Its function overlaps with FtsA. This chain is Cell division protein SepF, found in Lactiplantibacillus plantarum (strain ATCC BAA-793 / NCIMB 8826 / WCFS1) (Lactobacillus plantarum).